Here is a 209-residue protein sequence, read N- to C-terminus: Thymidine kinase (209 aa).

Residues 9–16 and 88–91 contribute to the ATP site; these read SAMNAGKT and DEAQ. The Proton acceptor role is filled by glutamate 89.

This sequence belongs to the thymidine kinase family. As to quaternary structure, homotetramer.

It is found in the cytoplasm. The enzyme catalyses thymidine + ATP = dTMP + ADP + H(+). In Xanthomonas oryzae pv. oryzae (strain MAFF 311018), this protein is Thymidine kinase.